We begin with the raw amino-acid sequence, 683 residues long: Elongation factor G 2 (683 aa).

Residues 4-279 form the tr-type G domain; sequence QQMRNIGIMA…AVVEYLPAPQ (276 aa). GTP contacts are provided by residues 13 to 20, 77 to 81, and 131 to 134; these read AHVDAGKT, DTPGH, and NKMD.

It belongs to the TRAFAC class translation factor GTPase superfamily. Classic translation factor GTPase family. EF-G/EF-2 subfamily.

It localises to the cytoplasm. In terms of biological role, catalyzes the GTP-dependent ribosomal translocation step during translation elongation. During this step, the ribosome changes from the pre-translocational (PRE) to the post-translocational (POST) state as the newly formed A-site-bound peptidyl-tRNA and P-site-bound deacylated tRNA move to the P and E sites, respectively. Catalyzes the coordinated movement of the two tRNA molecules, the mRNA and conformational changes in the ribosome. This chain is Elongation factor G 2 (fusB), found in Treponema pallidum (strain Nichols).